The chain runs to 129 residues: Cortical cell-delineating protein (129 aa).

A signal peptide (or 21) is located at residues 1–19; the sequence is MAPKVALFLALSLLFAATA. Asparagine 25 carries N-linked (GlcNAc...) asparagine glycosylation. 2 consecutive repeat copies span residues 29-34 and 35-40. The tract at residues 29–40 is 2 X 6 AA tandem repeats of P-V-V-P-T-P; it reads PVVPTPPVVPTP.

This sequence to carrot DC2.15 and PEMB3. In terms of tissue distribution, cortical ground meristem of developing roots.

Delineates a novel subset of developing cortical cells. It is probably involved in some aspect of transport of molecules to or from the vasculature. The protein is Cortical cell-delineating protein of Zea mays (Maize).